Here is a 139-residue protein sequence, read N- to C-terminus: Large ribosomal subunit protein uL16 (139 aa).

The span at 1–20 (MLMPRRVKHRKQHHPTRRGA) shows a compositional bias: basic residues. Residues 1–24 (MLMPRRVKHRKQHHPTRRGAAKGG) form a disordered region.

It belongs to the universal ribosomal protein uL16 family. As to quaternary structure, part of the 50S ribosomal subunit.

Binds 23S rRNA and is also seen to make contacts with the A and possibly P site tRNAs. The sequence is that of Large ribosomal subunit protein uL16 from Nocardioides sp. (strain ATCC BAA-499 / JS614).